The chain runs to 170 residues: MALLPILEFPDPRLRTKAVPVDAAEVTSQAFQTLLDDMFHTMYEAPGIGLAASQVDVHKRFMVIDISDEKNLPQVFVNPEIVSKQGEQLYQEGCLSVPGIYADVSRADAITVRYLDRQGQPQELHADGLLAVCIQHEMDHLDGKLFVDYLSPLKREMVRKKLAKQRKHVA.

Fe cation is bound by residues Cys-94 and His-136. Residue Glu-137 is part of the active site. A Fe cation-binding site is contributed by His-140.

It belongs to the polypeptide deformylase family. Fe(2+) is required as a cofactor.

The enzyme catalyses N-terminal N-formyl-L-methionyl-[peptide] + H2O = N-terminal L-methionyl-[peptide] + formate. In terms of biological role, removes the formyl group from the N-terminal Met of newly synthesized proteins. Requires at least a dipeptide for an efficient rate of reaction. N-terminal L-methionine is a prerequisite for activity but the enzyme has broad specificity at other positions. In Xanthomonas axonopodis pv. citri (strain 306), this protein is Peptide deformylase 2.